A 176-amino-acid polypeptide reads, in one-letter code: Protein Dr1 (176 aa).

Residue alanine 2 is modified to N-acetylalanine. The 64-residue stretch at 12 to 75 (TIPRAAINKM…ISPEHVIQAL (64 aa)) folds into the Histone-fold domain. The Nuclear localization signal motif lies at 100–103 (KRRK). A phosphoserine mark is found at serine 105, serine 106, serine 166, and serine 167. Over residues 152–167 (QLAAASASASNQAGSS) the composition is skewed to low complexity. The interval 152 to 176 (QLAAASASASNQAGSSQDEEDDDDI) is disordered.

The protein belongs to the NC2 beta/DR1 family. Heterodimer with DRAP1. DR1 exists in solution as a homotetramer that dissociates during interaction with TBP and then, after complexing with TBP, reassociates at a slow rate, to reconstitute the tetramer. Interacts with NFIL3. Component of the ADA2A-containing complex (ATAC), composed of KAT14, KAT2A, TADA2L, TADA3L, ZZ3, MBIP, WDR5, YEATS2, CCDC101 and DR1. Post-translationally, phosphorylation regulates its interaction with TBP. Not phosphorylated when bound to DRAP1.

It localises to the nucleus. Its function is as follows. The association of the DR1/DRAP1 heterodimer with TBP results in a functional repression of both activated and basal transcription of class II genes. This interaction precludes the formation of a transcription-competent complex by inhibiting the association of TFIIA and/or TFIIB with TBP. Can bind to DNA on its own. Component of the ATAC complex, a complex with histone acetyltransferase activity on histones H3 and H4. This Homo sapiens (Human) protein is Protein Dr1 (DR1).